The chain runs to 382 residues: Carboxynorspermidine/carboxyspermidine decarboxylase (382 aa).

Lysine 41 is modified (N6-(pyridoxal phosphate)lysine). Residues glutamate 236 and aspartate 272 each contribute to the substrate site.

Belongs to the Orn/Lys/Arg decarboxylase class-II family. NspC subfamily. Homodimer. Requires pyridoxal 5'-phosphate as cofactor.

The protein localises to the cytoplasm. It carries out the reaction carboxynorspermidine + H(+) = norspermidine + CO2. It catalyses the reaction carboxyspermidine + H(+) = spermidine + CO2. Functionally, catalyzes the decarboxylation of carboxynorspermidine and carboxyspermidine in vitro. In vivo, responsible for synthesizing spermidine, but not sym-norspermidine. The protein is Carboxynorspermidine/carboxyspermidine decarboxylase of Campylobacter jejuni subsp. jejuni serotype O:6 (strain 81116 / NCTC 11828).